We begin with the raw amino-acid sequence, 241 residues long: Acetoacetyl-CoA reductase (241 aa).

Residues arginine 12 to isoleucine 14, arginine 39, and asparagine 82 to threonine 86 contribute to the NADP(+) site. Substrate contacts are provided by residues aspartate 88 and glutamine 141 to glutamine 144. The active-site Proton acceptor is tyrosine 147. NADP(+) is bound at residue proline 177 to isoleucine 180. Substrate is bound at residue glycine 178–tyrosine 179.

Belongs to the short-chain dehydrogenases/reductases (SDR) family.

The protein resides in the cytoplasm. It carries out the reaction a (3R)-3-hydroxyacyl-CoA + NADP(+) = a 3-oxoacyl-CoA + NADPH + H(+). The protein operates within biopolymer metabolism; poly-(R)-3-hydroxybutanoate biosynthesis. This is Acetoacetyl-CoA reductase from Rhizobium meliloti (strain 1021) (Ensifer meliloti).